A 900-amino-acid chain; its full sequence is MKASEEEYRLNFFIKNDFKRKICKSCKTPFWTRDEKKEYCSDIPCTDYYFFDINIKSQPLTVKEAREKFLSFFEKRGHTRISPKPVLARWREDLYLTIASIVDFQPHVTSGLVPPPANPLVVSQPSIRLEDIDNVGITFGRHLTTFEMAAHHAFNYPDHYVYWKEETTAYATEFFTKELGIPEEELNFKESWWEGGGNAGPCLEVTVGGLELATLVFMQYKITDNGNYTPLKLKIVDTGYGVERIAWITQKTPSAFHAIYGNLVYKFFNKIGVAYIDETLLKVASRFAGKIDPDNPDTIKIHRQMVSKELGIDIKAVEEELDRAAKVFQILDHTKTIMLMLADGLVPSNSGEGYLGRLVIRRALKVLRLLKSDVRLYELVKEQIDFWKEDFPQVLKNKDYILDAVELEQQRFEKILEKVPSIASTLARKSEITTEDLIQVYDSNGIPPDLLEEELKKKSVKFELPRNFYALVAKRHQTSTIKSAYDKVKLPKDMLEYITALQPTEKLYYKDQYMRSFEGKVLGVYKNYLILDKTTFYPEGGGQLGDTGLIIDEKSSKRYEVIDTQKVNDVIVHILKEEPSTIKVGDNVRGEINWERRYRLMRHHTVTHVILAAAKKVLGEHVWQAGAEKTPEKGRLDITHHKTLTEEEVKLIENYANSVISDRRQVKPLEMNRMEAEMKYGVSIYEGGVPNSATIRLLEIKDWDIESCGGTHVSNTSEIGAVKIINVERIQDGVIRLEYVAGPALVDYIRETQAKIVEASKIIGTSPDQLTSRLRRILNEIEEKNNLIIQYRRIIETELLNNLKPYEINSNKIYIIEGLGDEEENKEILRKLTSTDNTIAISISDNRLQIATSKNMRVDKIVEELLKGGGKGGGKGTFANVILNSKKSKEEIIEIVRKSL.

Positions 604, 608, 708, and 712 each coordinate Zn(2+).

The protein belongs to the class-II aminoacyl-tRNA synthetase family. Zn(2+) serves as cofactor.

It localises to the cytoplasm. The enzyme catalyses tRNA(Ala) + L-alanine + ATP = L-alanyl-tRNA(Ala) + AMP + diphosphate. Catalyzes the attachment of alanine to tRNA(Ala) in a two-step reaction: alanine is first activated by ATP to form Ala-AMP and then transferred to the acceptor end of tRNA(Ala). Also edits incorrectly charged Ser-tRNA(Ala) and Gly-tRNA(Ala) via its editing domain. The polypeptide is Alanine--tRNA ligase (Saccharolobus islandicus (strain Y.G.57.14 / Yellowstone #1) (Sulfolobus islandicus)).